A 546-amino-acid chain; its full sequence is Chaperonin GroEL (546 aa).

Residues 30–33 (TLGP), Lys51, 87–91 (DGTTT), Gly415, and Asp495 each bind ATP.

This sequence belongs to the chaperonin (HSP60) family. In terms of assembly, forms a cylinder of 14 subunits composed of two heptameric rings stacked back-to-back. Interacts with the co-chaperonin GroES.

It is found in the cytoplasm. It catalyses the reaction ATP + H2O + a folded polypeptide = ADP + phosphate + an unfolded polypeptide.. Together with its co-chaperonin GroES, plays an essential role in assisting protein folding. The GroEL-GroES system forms a nano-cage that allows encapsulation of the non-native substrate proteins and provides a physical environment optimized to promote and accelerate protein folding. In Brucella melitensis biotype 1 (strain ATCC 23456 / CCUG 17765 / NCTC 10094 / 16M), this protein is Chaperonin GroEL.